The sequence spans 232 residues: Ubiquinone biosynthesis O-methyltransferase (232 aa).

S-adenosyl-L-methionine is bound by residues R36, G55, D76, and M120.

This sequence belongs to the methyltransferase superfamily. UbiG/COQ3 family.

It catalyses the reaction a 3-demethylubiquinol + S-adenosyl-L-methionine = a ubiquinol + S-adenosyl-L-homocysteine + H(+). It carries out the reaction a 3-(all-trans-polyprenyl)benzene-1,2-diol + S-adenosyl-L-methionine = a 2-methoxy-6-(all-trans-polyprenyl)phenol + S-adenosyl-L-homocysteine + H(+). It participates in cofactor biosynthesis; ubiquinone biosynthesis. O-methyltransferase that catalyzes the 2 O-methylation steps in the ubiquinone biosynthetic pathway. The chain is Ubiquinone biosynthesis O-methyltransferase from Burkholderia orbicola (strain MC0-3).